A 449-amino-acid polypeptide reads, in one-letter code: Adenylosuccinate synthetase (449 aa).

GTP contacts are provided by residues 37 to 43 (GDEGKGK) and 65 to 67 (GHT). Asp38 (proton acceptor) is an active-site residue. Mg(2+) is bound by residues Asp38 and Gly65. Residues 38–41 (DEGK), 63–66 (NAGH), Thr155, Arg169, Asn247, Thr262, and Arg326 each bind IMP. Catalysis depends on His66, which acts as the Proton donor. 322-328 (VTTKRKR) contributes to the substrate binding site. GTP is bound by residues Arg328, 354–356 (KLD), and 437–439 (GVG).

This sequence belongs to the adenylosuccinate synthetase family. Homodimer. Mg(2+) serves as cofactor.

It localises to the cytoplasm. The enzyme catalyses IMP + L-aspartate + GTP = N(6)-(1,2-dicarboxyethyl)-AMP + GDP + phosphate + 2 H(+). It participates in purine metabolism; AMP biosynthesis via de novo pathway; AMP from IMP: step 1/2. Functionally, plays an important role in the de novo pathway and in the salvage pathway of purine nucleotide biosynthesis. Catalyzes the first committed step in the biosynthesis of AMP from IMP. This chain is Adenylosuccinate synthetase, found in Drosophila willistoni (Fruit fly).